Reading from the N-terminus, the 101-residue chain is ATP-dependent Clp protease adapter protein ClpS (101 aa).

It belongs to the ClpS family. As to quaternary structure, binds to the N-terminal domain of the chaperone ClpA.

Involved in the modulation of the specificity of the ClpAP-mediated ATP-dependent protein degradation. This Clostridium acetobutylicum (strain ATCC 824 / DSM 792 / JCM 1419 / IAM 19013 / LMG 5710 / NBRC 13948 / NRRL B-527 / VKM B-1787 / 2291 / W) protein is ATP-dependent Clp protease adapter protein ClpS.